The following is a 229-amino-acid chain: Endonuclease NucS (229 aa).

It belongs to the NucS endonuclease family.

The protein resides in the cytoplasm. Cleaves both 3' and 5' ssDNA extremities of branched DNA structures. The sequence is that of Endonuclease NucS from Corynebacterium diphtheriae (strain ATCC 700971 / NCTC 13129 / Biotype gravis).